A 359-amino-acid polypeptide reads, in one-letter code: Methionine import ATP-binding protein MetN (359 aa).

A disordered region spans residues 1–21 (MSTPASTPAPDGSHQRDHHPG). The ABC transporter domain occupies 24–264 (VEFRGVTKVF…PQTTVAQRFV (241 aa)). 61-68 (GYSGAGKS) serves as a coordination point for ATP.

It belongs to the ABC transporter superfamily. Methionine importer (TC 3.A.1.24) family. In terms of assembly, the complex is composed of two ATP-binding proteins (MetN), two transmembrane proteins (MetI) and a solute-binding protein (MetQ).

It localises to the cell membrane. It carries out the reaction L-methionine(out) + ATP + H2O = L-methionine(in) + ADP + phosphate + H(+). The catalysed reaction is D-methionine(out) + ATP + H2O = D-methionine(in) + ADP + phosphate + H(+). Its function is as follows. Part of the ABC transporter complex MetNIQ involved in methionine import. Responsible for energy coupling to the transport system. This Corynebacterium efficiens (strain DSM 44549 / YS-314 / AJ 12310 / JCM 11189 / NBRC 100395) protein is Methionine import ATP-binding protein MetN.